An 839-amino-acid chain; its full sequence is Taste receptor type 1 member 2 (839 aa).

Residues 1–19 form the signal peptide; that stretch reads MGPRAKTICSLFFLLWVLA. The Extracellular segment spans residues 20-566; sequence EPAENSDFYL…VFLEWHEAPT (547 aa). N-linked (GlcNAc...) asparagine glycosylation is found at Asn-84, Asn-248, Asn-292, Asn-312, Asn-368, Asn-407, Asn-428, Asn-487, and Asn-527. Residues 567–587 traverse the membrane as a helical segment; the sequence is IAVALLAALGFLSTLAILVIF. Residues 588–602 lie on the Cytoplasmic side of the membrane; it reads WRHFQTPIVRSAGGP. The helical transmembrane segment at 603–623 threads the bilayer; sequence MCFLMLTLLLVAYMVVPVYVG. Over 624-635 the chain is Extracellular; sequence PPKVSTCLCRQA. A helical transmembrane segment spans residues 636–656; sequence LFPLCFTICISCIAVRSFQIV. Topologically, residues 657–681 are cytoplasmic; that stretch reads CAFKMASRFPRAYSYWVRYQGPYVS. The helical transmembrane segment at 682-702 threads the bilayer; the sequence is MAFITVLKMVIVVIGMLATGL. Residues 703 to 727 lie on the Extracellular side of the membrane; sequence SPTTRTDPDDPKITIVSCNPNYRNS. The helical transmembrane segment at 728–748 threads the bilayer; the sequence is LLFNTSLDLLLSVVGFSFAYM. The Cytoplasmic segment spans residues 749 to 760; that stretch reads GKELPTNYNEAK. The helical transmembrane segment at 761–781 threads the bilayer; sequence FITLSMTFYFTSSVSLCTFMS. Topologically, residues 782 to 784 are extracellular; sequence AYS. The helical transmembrane segment at 785 to 805 threads the bilayer; it reads GVLVTIVDLLVTVLNLLAISL. The Cytoplasmic segment spans residues 806 to 839; the sequence is GYFGPKCYMILFYPERNTSAYFNSMIQGYTMRRD.

Belongs to the G-protein coupled receptor 3 family. TAS1R subfamily. Forms heterodimers with TAS1R3.

Its subcellular location is the cell membrane. In terms of biological role, putative taste receptor. TAS1R2/TAS1R3 recognizes diverse natural and synthetic sweeteners. The sequence is that of Taste receptor type 1 member 2 (TAS1R2) from Pan troglodytes (Chimpanzee).